The following is a 148-amino-acid chain: Large ribosomal subunit protein bL9 (148 aa).

Belongs to the bacterial ribosomal protein bL9 family.

Functionally, binds to the 23S rRNA. This is Large ribosomal subunit protein bL9 from Streptomyces griseus subsp. griseus (strain JCM 4626 / CBS 651.72 / NBRC 13350 / KCC S-0626 / ISP 5235).